Reading from the N-terminus, the 671-residue chain is Solute carrier family 53 member 1 (671 aa).

The segment at 1–193 (MKFAEHLTAH…DIDRLIQETE (193 aa)) is important for promoting lysosomal/autophagosomal degradation of PXo bodies following inorganic phosphate (Pi) starvation. At 1–228 (MKFAEHLTAH…EQQSPWTTFK (228 aa)) the chain is on the cytoplasmic side. The SPX domain maps to 2-218 (KFAEHLTAHI…MKRLRVPPLG (217 aa)). Residues 152-159 (KILKKHDK) form an important for inositol polyphosphate binding region. Residues 229-253 (VGLFSGAFVVLFITVVIAAMFYGFG) traverse the membrane as a helical segment. Topologically, residues 254–255 (EN) are extracellular. Residues 256–287 (WRAGMRMFRAPFLIIECLFLWGVNVYGWRSSG) form a helical membrane-spanning segment. Residues 288-300 (VNHVLIFELDPRN) are Cytoplasmic-facing. The helical transmembrane segment at 301–328 (HLSEQNIMEVASVFGVIWACCVLSYIFC) threads the bilayer. The Extracellular segment spans residues 329 to 334 (DPLGIP). The chain crosses the membrane as a helical span at residues 335-356 (QYAAPLCLYTLMAAFLLNPTKT). Positions 357–374 (FHHEARFWAIRILIRVIM) form an intramembrane region, helical. Residues 375-379 (APFCF) are Cytoplasmic-facing. A discontinuously helical transmembrane segment spans residues 380–413 (VNFADFWLADQLNSMVPAFLDIPFLICFFGRSPT). Residues aspartate 389 and asparagine 392 each contribute to the phosphate site. The Extracellular portion of the chain corresponds to 414–415 (WH). Residues 416–455 (KAGKAASHCVEYVSLLHPIVAIMPAYFRFAQCIRRYRDTK) traverse the membrane as a discontinuously helical segment. The 205-residue stretch at 423 to 627 (HCVEYVSLLH…DCSDQTTILR (205 aa)) folds into the EXS domain. Position 456 (glutamate 456) is a topological domain, cytoplasmic. The helical transmembrane segment at 457–488 (SFPHLVNAAKYATSFFVVIFAHKYHTTTDTYP) threads the bilayer. Residues lysine 466 and tyrosine 467 each coordinate phosphate. Topologically, residues 489 to 491 (LSK) are extracellular. The chain crosses the membrane as a helical span at residues 492-519 (ENPWFYCWITAAIFSSCYAYTWDIKMDW). Topologically, residues 520–538 (GLFDSKAGDNRFLREEIVY) are cytoplasmic. Residues 539-570 (SSTWFYYFGIIEDLILRFSWTLSMSLIEAGYI) traverse the membrane as a discontinuously helical segment. Arginine 555, arginine 586, and arginine 587 together coordinate phosphate. The chain crosses the membrane as a helical span at residues 571 to 609 (EGDVMMTILSPLEVFRRFIWNYFRLENEHLNNVGKFRAV). The Cytoplasmic segment spans residues 610–671 (RDISVAPMDC…QGESIEDLCS (62 aa)).

This sequence belongs to the SYG1 (TC 2.A.94) family. In terms of assembly, homodimer. Interacts with the FAR/SIN/STRIPAK complex members Cka and Pp2A-29B. Detected in PXo bodies found in the enterocytes and progenitors of the midgut and in the hindgut, but rarely occur in the Malpighian tubules, crop, brain, muscles and germlines (at protein level).

It localises to the membrane. It catalyses the reaction phosphate(in) = phosphate(out). Functionally, inorganic ion transporter that mediates phosphate ion export across the cell membrane. Plays a major role in phosphate homeostasis, preventing intracellular phosphate accumulation and possible calcium phosphate precipitation, ultimately preserving calcium signaling. Binds inositol hexakisphosphate (Ins6P) and similar inositol polyphosphates, such as 5-diphospho-inositol pentakisphosphate (5-InsP7), which are important intracellular signaling molecules involved in regulation of phosphate flux. In enterocytes and differentiating progenitors of the gut, promotes the biogenesis and maintenance of organelles called PXo bodies that store intracellular inorganic phosphate (Pi), and also regulates Cka-JNK mediated tissue homeostasis in response to Pi availability in these tissues. Under conditions of adequate Pi, transports Pi into PXo bodies which convert and store the Pi in the form of phospholipids. It also inhibits Cka at the post-transcriptional level to prevent Cka-bsk/JNK mediated cell proliferation. Upon Pi starvation, Pxo expression is down-regulated resulting in the PXo bodies decreasing in phospholipid content until they undergo lysosomal/autophagosomal degradation and release the stored Pi back into the cytosol for use by the cell. Decrease in Pxo expression also activates the Cka protein, which moves to the nucleus to activate bsk/JNK which then induces nearby progenitor cells to proliferate and form new absorptive cells, probably helping the organism to cope with the nutrient deficiency by maximizing absorption of dietary Pi. The protein is Solute carrier family 53 member 1 of Drosophila melanogaster (Fruit fly).